The chain runs to 158 residues: uncharacterized protein (158 aa).

The next 2 helical transmembrane spans lie at 10–30 (LSSL…QFIV) and 137–157 (IEVF…AYFF).

It is found in the cell membrane. This is an uncharacterized protein from Bacillus subtilis (strain 168).